Consider the following 192-residue polypeptide: Inosine triphosphate pyrophosphatase (192 aa).

8–13 contributes to the ITP binding site; the sequence is TTNLKK. E34 contacts Mg(2+). Residues K46, 64 to 65, K81, 141 to 144, K164, and 169 to 170 contribute to the ITP site; these read DT, EGFD, and HR.

It belongs to the HAM1 NTPase family. As to quaternary structure, homodimer. It depends on Mg(2+) as a cofactor. Mn(2+) is required as a cofactor.

The protein localises to the cytoplasm. It is found in the nucleus. It catalyses the reaction ITP + H2O = IMP + diphosphate + H(+). The enzyme catalyses dITP + H2O = dIMP + diphosphate + H(+). The catalysed reaction is XTP + H2O = XMP + diphosphate + H(+). In terms of biological role, pyrophosphatase that hydrolyzes non-canonical purine nucleotides such as inosine triphosphate (ITP), deoxyinosine triphosphate (dITP) or xanthosine 5'-triphosphate (XTP) to their respective monophosphate derivatives. The enzyme does not distinguish between the deoxy- and ribose forms. Probably excludes non-canonical purines from RNA and DNA precursor pools, thus preventing their incorporation into RNA and DNA and avoiding chromosomal lesions. In Encephalitozoon cuniculi (strain GB-M1) (Microsporidian parasite), this protein is Inosine triphosphate pyrophosphatase.